The following is a 295-amino-acid chain: Protoheme IX farnesyltransferase (295 aa).

9 helical membrane-spanning segments follow: residues 8–28, 35–55, 74–94, 98–118, 132–152, 162–182, 208–228, 233–253, and 264–284; these read VTKP…FLLA, YPLF…GCVF, VLVK…VLGI, LLLY…GFVI, VYGT…GYCA, LILL…IAIF, ITLY…SGYA, LVVA…GYKA, and FVFS…DFNV.

This sequence belongs to the UbiA prenyltransferase family. Protoheme IX farnesyltransferase subfamily.

The protein resides in the cell inner membrane. It catalyses the reaction heme b + (2E,6E)-farnesyl diphosphate + H2O = Fe(II)-heme o + diphosphate. Its pathway is porphyrin-containing compound metabolism; heme O biosynthesis; heme O from protoheme: step 1/1. Its function is as follows. Converts heme B (protoheme IX) to heme O by substitution of the vinyl group on carbon 2 of heme B porphyrin ring with a hydroxyethyl farnesyl side group. In Yersinia pseudotuberculosis serotype O:1b (strain IP 31758), this protein is Protoheme IX farnesyltransferase.